Consider the following 414-residue polypeptide: Putative transporter AmpG 4 (414 aa).

A run of 12 helical transmembrane segments spans residues 15–35 (IFIL…TLSV), 44–63 (IAVI…KVFW), 84–104 (WLIL…KENP), 109–129 (TSLY…DIAV), 150–170 (VFGY…LAEI), 177–197 (LTFV…ITVN), 230–250 (FAVT…MLGA), 268–288 (IIAK…GGIV), 295–315 (FKGL…FIWL), 324–344 (ALLI…TALV), 360–379 (YALL…IYAG), and 389–409 (GFFI…MYLN).

This sequence belongs to the major facilitator superfamily.

It is found in the cell inner membrane. The polypeptide is Putative transporter AmpG 4 (ampG4) (Rickettsia felis (strain ATCC VR-1525 / URRWXCal2) (Rickettsia azadi)).